We begin with the raw amino-acid sequence, 873 residues long: Zinc fingers and homeoboxes protein 1 (873 aa).

The tract at residues Met1–Asn63 is disordered. The segment covering Gln18–Glu30 has biased composition (acidic residues). Thr36 bears the Phosphothreonine mark. Residues Ser45, Ser47, and Ser48 each carry the phosphoserine modification. 2 C2H2-type zinc fingers span residues Tyr70–His93 and Tyr102–His125. Lys159 is covalently cross-linked (Glycyl lysine isopeptide (Lys-Gly) (interchain with G-Cter in SUMO2)). The residue at position 202 (Ser202) is a Phosphoserine. The interval Ser202–Thr236 is disordered. Residues Asn212–Ile221 show a composition bias toward basic and acidic residues. Residues Glu223–Thr236 show a composition bias toward low complexity. Residues Asn272–Pro432 form a required for dimerization region. Positions Asn272–Phe564 are required for interaction with NFYA. The homeobox 1 DNA-binding region spans Asn284–Glu346. Glycyl lysine isopeptide (Lys-Gly) (interchain with G-Cter in SUMO2) cross-links involve residues Lys441, Lys454, Lys485, and Lys629. 2 consecutive DNA-binding regions (homeobox) follow at residues Ser464 to Gln526 and Pro569 to Met630. 2 disordered regions span residues Lys626–Lys667 and Ser732–Trp769. Position 648 is a phosphoserine (Ser648). Residues Ser660–Trp722 constitute a DNA-binding region (homeobox 4). The segment at Met734 to Asn768 is required for nuclear localization. Residues Leu740–Lys764 show a composition bias toward basic residues. Ser774 is subject to Phosphoserine. Residues Lys777–Phe832 constitute a DNA-binding region (homeobox 5). The disordered stretch occupies residues Ile829 to Asp873. Residues Leu831–Thr857 are compositionally biased toward acidic residues. The tract at residues Leu831–Asp873 is required for repressor activity. The segment covering His863–Asp873 has biased composition (basic residues).

It belongs to the ZHX family. As to quaternary structure, forms homodimers. Also forms heterodimers with ZHX3 which is a prerequisite for repressor activity and with ZHX2. Interacts with NFYA. Interacts with ATF7IP.

It localises to the nucleus. Functionally, acts as a transcriptional repressor. The polypeptide is Zinc fingers and homeoboxes protein 1 (ZHX1) (Gorilla gorilla gorilla (Western lowland gorilla)).